The following is a 158-amino-acid chain: uncharacterized protein (158 aa).

Its subcellular location is the mitochondrion. This is an uncharacterized protein from Arabidopsis thaliana (Mouse-ear cress).